The sequence spans 68 residues: Protein RH1 (68 aa).

This Pantherophis guttatus (Corn snake) protein is Protein RH1.